A 78-amino-acid chain; its full sequence is uncharacterized protein (78 aa).

The next 2 membrane-spanning stretches (helical) occupy residues 25 to 45 (IITA…DEVV) and 50 to 70 (KCAD…FVFV).

Its subcellular location is the membrane. This is an uncharacterized protein from Saccharomyces cerevisiae (strain ATCC 204508 / S288c) (Baker's yeast).